The chain runs to 152 residues: Ribosome maturation factor RimP (152 aa).

The protein belongs to the RimP family.

It localises to the cytoplasm. Its function is as follows. Required for maturation of 30S ribosomal subunits. This Pseudomonas putida (strain GB-1) protein is Ribosome maturation factor RimP.